Reading from the N-terminus, the 126-residue chain is Acidic phospholipase A2 S1E6-b (126 aa).

The N-terminal stretch at 1–3 (VEG) is a signal peptide. Cystine bridges form between cysteine 29–cysteine 119, cysteine 31–cysteine 47, cysteine 46–cysteine 98, cysteine 52–cysteine 126, cysteine 53–cysteine 91, cysteine 60–cysteine 84, and cysteine 78–cysteine 89. Residues tyrosine 30, glycine 32, and glycine 34 each contribute to the Ca(2+) site. Histidine 50 is a catalytic residue. Aspartate 51 is a binding site for Ca(2+). The active site involves aspartate 92.

Homodimer. It depends on Ca(2+) as a cofactor. Expressed by the venom gland.

The protein resides in the secreted. The enzyme catalyses a 1,2-diacyl-sn-glycero-3-phosphocholine + H2O = a 1-acyl-sn-glycero-3-phosphocholine + a fatty acid + H(+). In terms of biological role, snake venom phospholipase that inhibits ADP-induced platelet aggregation. PLA2 catalyzes the calcium-dependent hydrolysis of the 2-acyl groups in 3-sn-phosphoglycerides. The protein is Acidic phospholipase A2 S1E6-b of Calloselasma rhodostoma (Malayan pit viper).